The following is a 167-amino-acid chain: HVA22-like protein b (167 aa).

Transmembrane regions (helical) follow at residues 18 to 38, 47 to 67, and 68 to 88; these read VIAG…RAIE, QWLT…TFFR, and LLEW…WLVL.

Belongs to the DP1 family. Predominantly expressed in flower buds.

It localises to the membrane. This Arabidopsis thaliana (Mouse-ear cress) protein is HVA22-like protein b (HVA22B).